The primary structure comprises 125 residues: Fumarate reductase subunit D (125 aa).

3 consecutive transmembrane segments (helical) span residues 30 to 50 (FAMI…MGVI), 60 to 80 (VVSF…LALP), and 105 to 125 (IACY…IFML).

It belongs to the FrdD family. In terms of assembly, part of an enzyme complex containing four subunits: a flavoprotein (FrdA), an iron-sulfur protein (FrdB), and two hydrophobic anchor proteins (FrdC and FrdD).

Its subcellular location is the cell inner membrane. Its function is as follows. Anchors the catalytic components of the fumarate reductase complex to the cell membrane, binds quinones. The chain is Fumarate reductase subunit D from Vibrio vulnificus (strain YJ016).